We begin with the raw amino-acid sequence, 276 residues long: Release factor glutamine methyltransferase (276 aa).

S-adenosyl-L-methionine-binding positions include 117–121 (GTGTG), Asp140, Trp168, and Asn182. Residue 182–185 (NPPY) participates in substrate binding.

Belongs to the protein N5-glutamine methyltransferase family. PrmC subfamily.

It catalyses the reaction L-glutaminyl-[peptide chain release factor] + S-adenosyl-L-methionine = N(5)-methyl-L-glutaminyl-[peptide chain release factor] + S-adenosyl-L-homocysteine + H(+). Its function is as follows. Methylates the class 1 translation termination release factors RF1/PrfA and RF2/PrfB on the glutamine residue of the universally conserved GGQ motif. The polypeptide is Release factor glutamine methyltransferase (Yersinia pestis).